Consider the following 117-residue polypeptide: Large ribosomal subunit protein uL18 (117 aa).

This sequence belongs to the universal ribosomal protein uL18 family. In terms of assembly, part of the 50S ribosomal subunit; part of the 5S rRNA/L5/L18/L25 subcomplex. Contacts the 5S and 23S rRNAs.

In terms of biological role, this is one of the proteins that bind and probably mediate the attachment of the 5S RNA into the large ribosomal subunit, where it forms part of the central protuberance. In Klebsiella pneumoniae (strain 342), this protein is Large ribosomal subunit protein uL18.